Reading from the N-terminus, the 63-residue chain is Large ribosomal subunit protein uL30 (63 aa).

It belongs to the universal ribosomal protein uL30 family. Part of the 50S ribosomal subunit.

This chain is Large ribosomal subunit protein uL30, found in Xanthomonas campestris pv. campestris (strain 8004).